Reading from the N-terminus, the 65-residue chain is UPF0434 protein BQ10150 (65 aa).

This sequence belongs to the UPF0434 family.

The sequence is that of UPF0434 protein BQ10150 from Bartonella quintana (strain Toulouse) (Rochalimaea quintana).